The chain runs to 156 residues: Arginine repressor (156 aa).

Belongs to the ArgR family.

The protein resides in the cytoplasm. It functions in the pathway amino-acid biosynthesis; L-arginine biosynthesis [regulation]. Its function is as follows. Regulates arginine biosynthesis genes. This Enterobacter sp. (strain 638) protein is Arginine repressor.